The chain runs to 348 residues: S-adenosylmethionine:tRNA ribosyltransferase-isomerase (348 aa).

Belongs to the QueA family. Monomer.

The protein localises to the cytoplasm. The catalysed reaction is 7-aminomethyl-7-carbaguanosine(34) in tRNA + S-adenosyl-L-methionine = epoxyqueuosine(34) in tRNA + adenine + L-methionine + 2 H(+). Its pathway is tRNA modification; tRNA-queuosine biosynthesis. Transfers and isomerizes the ribose moiety from AdoMet to the 7-aminomethyl group of 7-deazaguanine (preQ1-tRNA) to give epoxyqueuosine (oQ-tRNA). The polypeptide is S-adenosylmethionine:tRNA ribosyltransferase-isomerase (Alteromonas mediterranea (strain DSM 17117 / CIP 110805 / LMG 28347 / Deep ecotype)).